Reading from the N-terminus, the 196-residue chain is dTTP/UTP pyrophosphatase (196 aa).

Catalysis depends on Asp-76, which acts as the Proton acceptor.

Belongs to the Maf family. YhdE subfamily. It depends on a divalent metal cation as a cofactor.

It is found in the cytoplasm. The enzyme catalyses dTTP + H2O = dTMP + diphosphate + H(+). It catalyses the reaction UTP + H2O = UMP + diphosphate + H(+). In terms of biological role, nucleoside triphosphate pyrophosphatase that hydrolyzes dTTP and UTP. May have a dual role in cell division arrest and in preventing the incorporation of modified nucleotides into cellular nucleic acids. The chain is dTTP/UTP pyrophosphatase from Chlorobium chlorochromatii (strain CaD3).